The primary structure comprises 421 residues: Serine hydroxymethyltransferase (421 aa).

(6S)-5,6,7,8-tetrahydrofolate is bound by residues Leu120 and Gly124–Leu126. The residue at position 229 (Lys229) is an N6-(pyridoxal phosphate)lysine. Ser354 to Phe356 is a binding site for (6S)-5,6,7,8-tetrahydrofolate.

Belongs to the SHMT family. Homodimer. Pyridoxal 5'-phosphate serves as cofactor.

The protein localises to the cytoplasm. The catalysed reaction is (6R)-5,10-methylene-5,6,7,8-tetrahydrofolate + glycine + H2O = (6S)-5,6,7,8-tetrahydrofolate + L-serine. It participates in one-carbon metabolism; tetrahydrofolate interconversion. The protein operates within amino-acid biosynthesis; glycine biosynthesis; glycine from L-serine: step 1/1. Its function is as follows. Catalyzes the reversible interconversion of serine and glycine with tetrahydrofolate (THF) serving as the one-carbon carrier. This reaction serves as the major source of one-carbon groups required for the biosynthesis of purines, thymidylate, methionine, and other important biomolecules. Also exhibits THF-independent aldolase activity toward beta-hydroxyamino acids, producing glycine and aldehydes, via a retro-aldol mechanism. The sequence is that of Serine hydroxymethyltransferase from Opitutus terrae (strain DSM 11246 / JCM 15787 / PB90-1).